Reading from the N-terminus, the 156-residue chain is ATP synthase subunit b (156 aa).

The helical transmembrane segment at 11–31 (AIAFILFVWFCMKYVWPPLMA) threads the bilayer.

The protein belongs to the ATPase B chain family. In terms of assembly, F-type ATPases have 2 components, F(1) - the catalytic core - and F(0) - the membrane proton channel. F(1) has five subunits: alpha(3), beta(3), gamma(1), delta(1), epsilon(1). F(0) has three main subunits: a(1), b(2) and c(10-14). The alpha and beta chains form an alternating ring which encloses part of the gamma chain. F(1) is attached to F(0) by a central stalk formed by the gamma and epsilon chains, while a peripheral stalk is formed by the delta and b chains.

The protein localises to the cell inner membrane. F(1)F(0) ATP synthase produces ATP from ADP in the presence of a proton or sodium gradient. F-type ATPases consist of two structural domains, F(1) containing the extramembraneous catalytic core and F(0) containing the membrane proton channel, linked together by a central stalk and a peripheral stalk. During catalysis, ATP synthesis in the catalytic domain of F(1) is coupled via a rotary mechanism of the central stalk subunits to proton translocation. Its function is as follows. Component of the F(0) channel, it forms part of the peripheral stalk, linking F(1) to F(0). This Salmonella agona (strain SL483) protein is ATP synthase subunit b.